Reading from the N-terminus, the 120-residue chain is Large ribosomal subunit protein bL12 (120 aa).

This sequence belongs to the bacterial ribosomal protein bL12 family. In terms of assembly, homodimer. Part of the ribosomal stalk of the 50S ribosomal subunit. Forms a multimeric L10(L12)X complex, where L10 forms an elongated spine to which 2 to 4 L12 dimers bind in a sequential fashion. Binds GTP-bound translation factors.

Functionally, forms part of the ribosomal stalk which helps the ribosome interact with GTP-bound translation factors. Is thus essential for accurate translation. This chain is Large ribosomal subunit protein bL12, found in Brevibacillus brevis (strain 47 / JCM 6285 / NBRC 100599).